A 442-amino-acid chain; its full sequence is Shufflon protein B (442 aa).

Residues 1-361 (MKKYDRGWAS…TGAILSCQSG (361 aa)) are constant region. Residues 362–442 (TWKSSSASIW…SYFMKITCLK (81 aa)) form a variable region region.

In Escherichia coli, this protein is Shufflon protein B.